We begin with the raw amino-acid sequence, 295 residues long: Cytidine deaminase (295 aa).

2 CMP/dCMP-type deaminase domains span residues 48-168 (TDSE…FGPA) and 187-295 (KETD…YVAA). A substrate-binding site is contributed by 89–91 (NME). H102 serves as a coordination point for Zn(2+). Residue E104 is the Proton donor of the active site. Positions 129 and 132 each coordinate Zn(2+).

Belongs to the cytidine and deoxycytidylate deaminase family. In terms of assembly, homodimer. It depends on Zn(2+) as a cofactor.

The enzyme catalyses cytidine + H2O + H(+) = uridine + NH4(+). The catalysed reaction is 2'-deoxycytidine + H2O + H(+) = 2'-deoxyuridine + NH4(+). Its function is as follows. This enzyme scavenges exogenous and endogenous cytidine and 2'-deoxycytidine for UMP synthesis. The sequence is that of Cytidine deaminase from Photobacterium profundum (strain SS9).